Here is a 379-residue protein sequence, read N- to C-terminus: 2-dehydropantoate 2-reductase (379 aa).

Residues 13–18 (GLGAMG) and Asn119 contribute to the NADP(+) site. Position 119 (Asn119) interacts with substrate. Lys224 functions as the Proton donor in the catalytic mechanism. Positions 228, 232, and 316 each coordinate substrate. Position 328 (Glu328) interacts with NADP(+).

The protein belongs to the ketopantoate reductase family.

The enzyme catalyses (R)-pantoate + NADP(+) = 2-dehydropantoate + NADPH + H(+). It functions in the pathway cofactor biosynthesis; (R)-pantothenate biosynthesis; (R)-pantoate from 3-methyl-2-oxobutanoate: step 2/2. In terms of biological role, catalyzes the NADPH-dependent reduction of ketopantoate into pantoic acid. The polypeptide is 2-dehydropantoate 2-reductase (PAN5) (Saccharomyces cerevisiae (strain ATCC 204508 / S288c) (Baker's yeast)).